Reading from the N-terminus, the 282-residue chain is Tetraspanin-6 (282 aa).

Residues 1-7 are Cytoplasmic-facing; the sequence is MYRFSNT. The helical transmembrane segment at 8–28 threads the bilayer; sequence VIGVLNLLTLLASIPIIGTAL. The Extracellular segment spans residues 29–44; sequence YKARSSTTCENFLQTP. The helical transmembrane segment at 45 to 65 threads the bilayer; it reads LLVIGFIILIVSLAGFIGACF. Residues 66 to 74 lie on the Cytoplasmic side of the membrane; that stretch reads NVAWALWVY. The helical transmembrane segment at 75-95 threads the bilayer; that stretch reads LVVMIFLIATLMGLTLFGLVV. The Extracellular segment spans residues 96 to 220; that stretch reads TSQGGGVEVP…EIRLDWRKLS (125 aa). Residues 221 to 241 traverse the membrane as a helical segment; it reads VVNILVLVLLIAVYAAGCCAF. Residues 242-282 are Cytoplasmic-facing; that stretch reads HNTRHAAHPYHPSDDNRMTRVRPRWDYYWWRWWHEKKEQLY.

Belongs to the tetraspanin (TM4SF) family.

The protein localises to the membrane. Its function is as follows. May be involved in the regulation of cell differentiation. This is Tetraspanin-6 (TET6) from Arabidopsis thaliana (Mouse-ear cress).